A 219-amino-acid chain; its full sequence is Auxin-responsive protein IAA24 (219 aa).

The short motif at 24 to 28 (LCLRL) is the EAR-like (transcriptional repression) element. Disordered stretches follow at residues 24–88 (LCLR…AKAQ) and 109–128 (AAAA…QQGG). Residues 60-71 (STDSMASGTGTS) show a composition bias toward polar residues. The PB1 domain occupies 129–215 (GLYVKVSMDG…SCKKLRIMKG (87 aa)).

It belongs to the Aux/IAA family. As to quaternary structure, homodimers and heterodimers. Highly expressed in flowers. Expressed in seedlings.

The protein resides in the nucleus. Aux/IAA proteins are short-lived transcriptional factors that function as repressors of early auxin response genes at low auxin concentrations. The chain is Auxin-responsive protein IAA24 (IAA24) from Oryza sativa subsp. japonica (Rice).